A 132-amino-acid polypeptide reads, in one-letter code: Small ribosomal subunit protein uS8 (132 aa).

It belongs to the universal ribosomal protein uS8 family. As to quaternary structure, part of the 30S ribosomal subunit. Contacts proteins S5 and S12.

Its function is as follows. One of the primary rRNA binding proteins, it binds directly to 16S rRNA central domain where it helps coordinate assembly of the platform of the 30S subunit. The sequence is that of Small ribosomal subunit protein uS8 from Rhizobium etli (strain CIAT 652).